Here is a 226-residue protein sequence, read N- to C-terminus: PKHD-type hydroxylase TERTU_2553 (226 aa).

Positions 78 to 177 constitute a Fe2OG dioxygenase domain; sequence KIYPPKFNCY…RVASFIWIQS (100 aa). 3 residues coordinate Fe cation: H96, D98, and H158. Position 168 (R168) interacts with 2-oxoglutarate.

Fe(2+) is required as a cofactor. L-ascorbate serves as cofactor.

This is PKHD-type hydroxylase TERTU_2553 from Teredinibacter turnerae (strain ATCC 39867 / T7901).